The primary structure comprises 198 residues: FMN-dependent NADH:quinone oxidoreductase (198 aa).

FMN is bound at residue 96-99 (MYNF).

Belongs to the azoreductase type 1 family. In terms of assembly, homodimer. Requires FMN as cofactor.

It catalyses the reaction 2 a quinone + NADH + H(+) = 2 a 1,4-benzosemiquinone + NAD(+). The enzyme catalyses N,N-dimethyl-1,4-phenylenediamine + anthranilate + 2 NAD(+) = 2-(4-dimethylaminophenyl)diazenylbenzoate + 2 NADH + 2 H(+). Its function is as follows. Quinone reductase that provides resistance to thiol-specific stress caused by electrophilic quinones. Also exhibits azoreductase activity. Catalyzes the reductive cleavage of the azo bond in aromatic azo compounds to the corresponding amines. The polypeptide is FMN-dependent NADH:quinone oxidoreductase (Burkholderia mallei (strain ATCC 23344)).